We begin with the raw amino-acid sequence, 127 residues long: Phosphoribosyl-ATP pyrophosphatase (127 aa).

This sequence belongs to the PRA-PH family.

Its subcellular location is the cytoplasm. It carries out the reaction 1-(5-phospho-beta-D-ribosyl)-ATP + H2O = 1-(5-phospho-beta-D-ribosyl)-5'-AMP + diphosphate + H(+). The protein operates within amino-acid biosynthesis; L-histidine biosynthesis; L-histidine from 5-phospho-alpha-D-ribose 1-diphosphate: step 2/9. The chain is Phosphoribosyl-ATP pyrophosphatase from Polaromonas sp. (strain JS666 / ATCC BAA-500).